We begin with the raw amino-acid sequence, 318 residues long: Acetaldehyde dehydrogenase 2 (318 aa).

9-12 (SGNI) is a binding site for NAD(+). The active-site Acyl-thioester intermediate is C129. Residues 160 to 168 (SAGPGTRAN) and N288 contribute to the NAD(+) site.

This sequence belongs to the acetaldehyde dehydrogenase family.

It catalyses the reaction acetaldehyde + NAD(+) + CoA = acetyl-CoA + NADH + H(+). This is Acetaldehyde dehydrogenase 2 from Mycolicibacterium vanbaalenii (strain DSM 7251 / JCM 13017 / BCRC 16820 / KCTC 9966 / NRRL B-24157 / PYR-1) (Mycobacterium vanbaalenii).